A 25-amino-acid chain; its full sequence is Ribosome-inactivating protein velutin (25 aa).

The disordered stretch occupies residues 1–25 (XHPDLFXXRPDNTASPKFEDPRLNP).

Belongs to the ribosome-inactivating protein family.

The enzyme catalyses Endohydrolysis of the N-glycosidic bond at one specific adenosine on the 28S rRNA.. Inhibits protein synthesis but does not possess ribonuclease activity. Also inhibits HIV-1 reverse transcriptase, beta-glucosidase and beta-glucuronidase. The sequence is that of Ribosome-inactivating protein velutin from Flammulina velutipes (Agaricus velutipes).